We begin with the raw amino-acid sequence, 181 residues long: NADH-quinone oxidoreductase subunit B 2 (181 aa).

4 residues coordinate [4Fe-4S] cluster: cysteine 44, cysteine 45, cysteine 110, and cysteine 139.

It belongs to the complex I 20 kDa subunit family. NDH-1 is composed of 14 different subunits. Subunits NuoB, C, D, E, F, and G constitute the peripheral sector of the complex. The cofactor is [4Fe-4S] cluster.

It is found in the cell inner membrane. The enzyme catalyses a quinone + NADH + 5 H(+)(in) = a quinol + NAD(+) + 4 H(+)(out). Functionally, NDH-1 shuttles electrons from NADH, via FMN and iron-sulfur (Fe-S) centers, to quinones in the respiratory chain. The immediate electron acceptor for the enzyme in this species is believed to be a menaquinone. Couples the redox reaction to proton translocation (for every two electrons transferred, four hydrogen ions are translocated across the cytoplasmic membrane), and thus conserves the redox energy in a proton gradient. In Cytophaga hutchinsonii (strain ATCC 33406 / DSM 1761 / CIP 103989 / NBRC 15051 / NCIMB 9469 / D465), this protein is NADH-quinone oxidoreductase subunit B 2.